Consider the following 288-residue polypeptide: UPF0494 membrane protein C212.04c (288 aa).

4 consecutive transmembrane segments (helical) span residues 107–127, 144–164, 174–194, and 198–218; these read WVLLIIWSIITILTIDKKFKI, IWGPIVIYVGLFILLLSAFNY, PLISMVIAWVGVVIAAFSVII, and IAGVIAAFSVIITATIAGVIA.

This sequence belongs to the UPF0494 family.

The protein resides in the cytoplasm. It localises to the endoplasmic reticulum. Its subcellular location is the membrane. This Schizosaccharomyces pombe (strain 972 / ATCC 24843) (Fission yeast) protein is UPF0494 membrane protein C212.04c.